A 477-amino-acid polypeptide reads, in one-letter code: Methylenetetrahydrofolate--tRNA-(uracil-5-)-methyltransferase TrmFO (477 aa).

FAD is bound at residue 14–19; the sequence is GGGLAG.

The protein belongs to the MnmG family. TrmFO subfamily. The cofactor is FAD.

It is found in the cytoplasm. The catalysed reaction is uridine(54) in tRNA + (6R)-5,10-methylene-5,6,7,8-tetrahydrofolate + NADH + H(+) = 5-methyluridine(54) in tRNA + (6S)-5,6,7,8-tetrahydrofolate + NAD(+). It catalyses the reaction uridine(54) in tRNA + (6R)-5,10-methylene-5,6,7,8-tetrahydrofolate + NADPH + H(+) = 5-methyluridine(54) in tRNA + (6S)-5,6,7,8-tetrahydrofolate + NADP(+). Catalyzes the folate-dependent formation of 5-methyl-uridine at position 54 (M-5-U54) in all tRNAs. This is Methylenetetrahydrofolate--tRNA-(uracil-5-)-methyltransferase TrmFO from Rhizobium etli (strain ATCC 51251 / DSM 11541 / JCM 21823 / NBRC 15573 / CFN 42).